A 509-amino-acid polypeptide reads, in one-letter code: Maturase K (509 aa).

It belongs to the intron maturase 2 family. MatK subfamily.

The protein localises to the plastid. It is found in the chloroplast. In terms of biological role, usually encoded in the trnK tRNA gene intron. Probably assists in splicing its own and other chloroplast group II introns. This chain is Maturase K, found in Atropa belladonna (Belladonna).